The following is a 75-amino-acid chain: UPF0352 protein YejL (75 aa).

Belongs to the UPF0352 family.

The sequence is that of UPF0352 protein YejL from Shigella sonnei (strain Ss046).